Here is a 273-residue protein sequence, read N- to C-terminus: IMGHMVNAIEQVDEFLNLGANAIEFDIDFDKDGIAQITHHGIPCDCGRKCTKKAIFTEYLDNIRQVTTPDDPKFREQLVLLALDLKLQRISSAKAYRAGEDVAKKLLDHYWRRGNSKARAYILLNIPLVEDYEFIRAFKDTLKNEGYESYNDKVGINFTGNEDLDKIRDVLEILGIHKQVWQADGITSCFARGTERLKEALKKRDTPGYNYIDKVYAWTLVRKSIMRRSLRLGVDGVMSNNPDRVIKVLKEKEFADKFRLATYNDNPWEKFRG.

His-4 is an active-site residue. The Mg(2+) site is built by Glu-24 and Asp-26. His-40 serves as the catalytic Nucleophile. 2 cysteine pairs are disulfide-bonded: Cys-44–Cys-50 and Cys-46–Cys-189. Mg(2+) is bound at residue Asp-84.

The protein belongs to the arthropod phospholipase D family. Class II subfamily. Mg(2+) is required as a cofactor. As to expression, expressed by the venom gland.

It is found in the secreted. It catalyses the reaction an N-(acyl)-sphingosylphosphocholine = an N-(acyl)-sphingosyl-1,3-cyclic phosphate + choline. It carries out the reaction an N-(acyl)-sphingosylphosphoethanolamine = an N-(acyl)-sphingosyl-1,3-cyclic phosphate + ethanolamine. The enzyme catalyses a 1-acyl-sn-glycero-3-phosphocholine = a 1-acyl-sn-glycero-2,3-cyclic phosphate + choline. The catalysed reaction is a 1-acyl-sn-glycero-3-phosphoethanolamine = a 1-acyl-sn-glycero-2,3-cyclic phosphate + ethanolamine. Its function is as follows. Dermonecrotic toxins cleave the phosphodiester linkage between the phosphate and headgroup of certain phospholipids (sphingolipid and lysolipid substrates), forming an alcohol (often choline) and a cyclic phosphate. This toxin acts on sphingomyelin (SM). It may also act on ceramide phosphoethanolamine (CPE), lysophosphatidylcholine (LPC) and lysophosphatidylethanolamine (LPE), but not on lysophosphatidylserine (LPS), and lysophosphatidylglycerol (LPG). It acts by transphosphatidylation, releasing exclusively cyclic phosphate products as second products. Induces dermonecrosis, hemolysis, increased vascular permeability, edema, inflammatory response, and platelet aggregation. This Sicarius cf. damarensis (strain GJB-2008) (Six-eyed sand spider) protein is Dermonecrotic toxin SdSicTox-betaIIB1aiii.